The primary structure comprises 210 residues: NAD(P)H-quinone oxidoreductase subunit I (210 aa).

4Fe-4S ferredoxin-type domains lie at 55–84 (GRIH…VDWV) and 95–124 (RNYS…MTEE). Positions 64, 67, 70, 74, 104, 107, 110, and 114 each coordinate [4Fe-4S] cluster.

This sequence belongs to the complex I 23 kDa subunit family. As to quaternary structure, NDH-1 is composed of at least 11 different subunits. The cofactor is [4Fe-4S] cluster.

It is found in the cellular thylakoid membrane. The catalysed reaction is a plastoquinone + NADH + (n+1) H(+)(in) = a plastoquinol + NAD(+) + n H(+)(out). The enzyme catalyses a plastoquinone + NADPH + (n+1) H(+)(in) = a plastoquinol + NADP(+) + n H(+)(out). Functionally, NDH-1 shuttles electrons from an unknown electron donor, via FMN and iron-sulfur (Fe-S) centers, to quinones in the respiratory and/or the photosynthetic chain. The immediate electron acceptor for the enzyme in this species is believed to be plastoquinone. Couples the redox reaction to proton translocation, and thus conserves the redox energy in a proton gradient. The protein is NAD(P)H-quinone oxidoreductase subunit I of Synechococcus sp. (strain CC9902).